The following is a 154-amino-acid chain: Protein X (154 aa).

The tract at residues 68–117 (PCALRFTSARRMETTVNAHQILPKVLHKRTLGLSAMSTTDLEAYFKDCLF) is mitochondrial targeting sequence.

The protein belongs to the orthohepadnavirus protein X family. May form homodimer. May interact with host CEBPA, CFLAR, CREB1, DDB1, E4F1, HBXIP, HSPD1/HSP60, NFKBIA, POLR2E and SMAD4. Interacts with host SMC5-SMC6 complex and induces its degradation. Interacts with host TRPC4AP; leading to prevent ubiquitination of TRPC4AP. Interacts with host PLSCR1; this interaction promotes ubiquitination and degradation of HBx and impairs HBx-mediated cell proliferation. Post-translationally, a fraction may be phosphorylated in insect cells and HepG2 cells, a human hepatoblastoma cell line. Phosphorylated in vitro by host protein kinase C or mitogen-activated protein kinase. N-acetylated in insect cells.

Its subcellular location is the host cytoplasm. The protein localises to the host nucleus. The protein resides in the host mitochondrion. In terms of biological role, multifunctional protein that plays a role in silencing host antiviral defenses and promoting viral transcription. Does not seem to be essential for HBV infection. May be directly involved in development of cirrhosis and liver cancer (hepatocellular carcinoma). Most of cytosolic activities involve modulation of cytosolic calcium. The effect on apoptosis is controversial depending on the cell types in which the studies have been conducted. May induce apoptosis by localizing in mitochondria and causing loss of mitochondrial membrane potential. May also modulate apoptosis by binding host CFLAR, a key regulator of the death-inducing signaling complex (DISC). Promotes viral transcription by using the host E3 ubiquitin ligase DDB1 to target the SMC5-SMC6 complex to proteasomal degradation. This host complex would otherwise bind to viral episomal DNA, and prevents its transcription. Moderately stimulates transcription of many different viral and cellular transcription elements. Promoters and enhancers stimulated by HBx contain DNA binding sites for NF-kappa-B, AP-1, AP-2, c-EBP, ATF/CREB, or the calcium-activated factor NF-AT. The protein is Protein X of Hepatitis B virus genotype D subtype ayw (isolate France/Tiollais/1979) (HBV-D).